A 489-amino-acid chain; its full sequence is Serine/threonine-protein kinase BSK3 (489 aa).

Residue Gly2 is the site of N-myristoyl glycine attachment. The Protein kinase domain occupies 58–324; the sequence is EYIVSEHGEK…ETEVLSHVLM (267 aa). ATP is bound by residues 64–72 and Lys86; that span reads HGEKAPNVV. Asp180 serves as the catalytic Proton acceptor. At Ser212 the chain carries Phosphoserine.

The protein belongs to the protein kinase superfamily. Ser/Thr protein kinase family. As to quaternary structure, interacts with BRI1. Phosphorylated by BRI1 upon brassinolide (BL) treatment. Phosphorylated by ASK7/BIN2 and ASK9/BIL2.

It is found in the cell membrane. The catalysed reaction is L-seryl-[protein] + ATP = O-phospho-L-seryl-[protein] + ADP + H(+). It carries out the reaction L-threonyl-[protein] + ATP = O-phospho-L-threonyl-[protein] + ADP + H(+). In terms of biological role, probable serine/threonine kinase that acts as a positive regulator of brassinosteroid (BR) signaling downstream of the receptor kinase BRI1. Mediates signal transduction from BRI1 by functioning as substrate of BRI1. Functions redundantly with BSK4, BSK6, BSK7 and BSK8. This chain is Serine/threonine-protein kinase BSK3, found in Arabidopsis thaliana (Mouse-ear cress).